We begin with the raw amino-acid sequence, 464 residues long: Siroheme synthase (464 aa).

A precorrin-2 dehydrogenase /sirohydrochlorin ferrochelatase region spans residues 1 to 203; the sequence is MEYLPLFHNL…GQGAEAERLL (203 aa). Residues 22–23 and 43–44 each bind NAD(+); these read EI and PE. Position 128 is a phosphoserine (Ser128). The segment at 216–464 is uroporphyrinogen-III C-methyltransferase; that stretch reads GEVYLVGAGP…AWFEGAQSEV (249 aa). S-adenosyl-L-methionine is bound at residue Pro225. Asp248 (proton acceptor) is an active-site residue. Catalysis depends on Lys270, which acts as the Proton donor. S-adenosyl-L-methionine contacts are provided by residues 301–303, Ile306, 331–332, Met383, and Gly412; these read GGD and TA.

The protein in the N-terminal section; belongs to the precorrin-2 dehydrogenase / sirohydrochlorin ferrochelatase family. In the C-terminal section; belongs to the precorrin methyltransferase family.

It catalyses the reaction uroporphyrinogen III + 2 S-adenosyl-L-methionine = precorrin-2 + 2 S-adenosyl-L-homocysteine + H(+). The catalysed reaction is precorrin-2 + NAD(+) = sirohydrochlorin + NADH + 2 H(+). The enzyme catalyses siroheme + 2 H(+) = sirohydrochlorin + Fe(2+). It functions in the pathway cofactor biosynthesis; adenosylcobalamin biosynthesis; precorrin-2 from uroporphyrinogen III: step 1/1. Its pathway is cofactor biosynthesis; adenosylcobalamin biosynthesis; sirohydrochlorin from precorrin-2: step 1/1. The protein operates within porphyrin-containing compound metabolism; siroheme biosynthesis; precorrin-2 from uroporphyrinogen III: step 1/1. It participates in porphyrin-containing compound metabolism; siroheme biosynthesis; siroheme from sirohydrochlorin: step 1/1. It functions in the pathway porphyrin-containing compound metabolism; siroheme biosynthesis; sirohydrochlorin from precorrin-2: step 1/1. In terms of biological role, multifunctional enzyme that catalyzes the SAM-dependent methylations of uroporphyrinogen III at position C-2 and C-7 to form precorrin-2 via precorrin-1. Then it catalyzes the NAD-dependent ring dehydrogenation of precorrin-2 to yield sirohydrochlorin. Finally, it catalyzes the ferrochelation of sirohydrochlorin to yield siroheme. The sequence is that of Siroheme synthase from Pseudomonas fluorescens (strain ATCC BAA-477 / NRRL B-23932 / Pf-5).